Here is a 497-residue protein sequence, read N- to C-terminus: Cysteine--tRNA ligase (497 aa).

Cys-46 contributes to the Zn(2+) binding site. Residues 48-58 (PTVYSDAHLGH) carry the 'HIGH' region motif. Residues Cys-237, His-262, and Glu-266 each contribute to the Zn(2+) site. A 'KMSKS' region motif is present at residues 293-297 (KMSKS). Residue Lys-296 participates in ATP binding.

The protein belongs to the class-I aminoacyl-tRNA synthetase family. Monomer. Requires Zn(2+) as cofactor.

It is found in the cytoplasm. It catalyses the reaction tRNA(Cys) + L-cysteine + ATP = L-cysteinyl-tRNA(Cys) + AMP + diphosphate. In Deinococcus geothermalis (strain DSM 11300 / CIP 105573 / AG-3a), this protein is Cysteine--tRNA ligase.